The following is a 90-amino-acid chain: Progonadoliberin-1 (90 aa).

A signal peptide spans 1–24; sequence MSRHVTVVLLLAIVLLLSSHMIHG. Q25 is modified (pyrrolidone carboxylic acid). G34 is subject to Glycine amide.

The protein belongs to the GnRH family. As to expression, forebrain.

The protein localises to the secreted. Stimulates the secretion of gonadotropins. The protein is Progonadoliberin-1 (gnrh1) of Aquarana catesbeiana (American bullfrog).